Here is a 933-residue protein sequence, read N- to C-terminus: MNQIKSNRELYLQYSASAPKLLAHVSKLLIFCRNSGISIPKGIRNIFEFTWEELINDPAVPTASEIQDLVVTFGTPTVVLAEVIPVQVLPMQKKQPPPAPPPTLMPAATSGGKYVPPTSTSAKLMPNGQNTLHKFQRQSIHLLTELLSLKMKAMVESASAGANPLDITKRFVEASQLLHLNAKEMAFDCLTGTVGKSCLSTAQLGKESSMNISAMGVNTPYQLVYQTSTACLSFSLCTGKESRKKDIGAKPKPVDDVSPQPVRARTPPENTVVELPDPCPEAREKLQDMCRHIEAERILWRGRNASCPMIFRNYRSRISSHLMLASKGDSHHPLTTGTQITASAPHQPSSQHAQMGRHSQEWKGPKKPIKLHYTFYDGSSFIYYPSGNIALLQIPTCCRGKPITCLFNDMPNTFLALFNAEGLGCVYYNLKNCCPYVLVLDEEGGITNDQKGYIVHRWSWASKTETLLSLEYKVNEQMKLTVLGQDSITVTFTSMNETVTISVSPKSCPHNVLHDKRPVRRISLMDEKVSKTNRALAEIKKRFQKTVTQFMNSVLLAAGLFTLEYPNPKETETSRVKLKPGSNQDRIRKTSLYQGENHMRIQSARQDSIINETLKEDSILTSLAHVQKKNGKVQVKVLPRGKRREVRSPTRWAASPSDCPLVLRRLILKEDIRAGCKCIVKAPLVSDLELERFLSAPRDPNQVLVFGIMSSQDPTLTAQLQWLMDTLYSHLQQGRSSPCIQCRHDPYRLLRYDLDSPLQKDPPLMVKKFAVIHGMVLMFAGGKLLFGGCVLNGYGFSKQNLLKQIFRAQQDCKMGYFLPDNYKFKHDAFKASRIAKPCGLSSRGVPSQFLGLETEPSMSTYVTNLDDTESTKKPPSDDYEGSVSSVALVDKIEKEPPPSPEKVKPPEIELQPFTKMRRSSKKTAGFKKLNSKK.

A compositionally biased stretch (basic and acidic residues) spans 244–255 (KKDIGAKPKPVD). Disordered stretches follow at residues 244–277 (KKDI…ELPD) and 343–364 (SAPH…EWKG). Polar residues predominate over residues 343 to 353 (SAPHQPSSQHA). The chain crosses the membrane as a helical span at residues 771–791 (VIHGMVLMFAGGKLLFGGCVL). Positions 890 to 907 (DKIEKEPPPSPEKVKPPE) are enriched in basic and acidic residues. The interval 890-933 (DKIEKEPPPSPEKVKPPEIELQPFTKMRRSSKKTAGFKKLNSKK) is disordered. Basic residues predominate over residues 915–933 (KMRRSSKKTAGFKKLNSKK).

The protein localises to the membrane. This is an uncharacterized protein from Mus musculus (Mouse).